The chain runs to 236 residues: UPF0502 protein BceJ2315_62050 (236 aa).

This sequence belongs to the UPF0502 family.

This Burkholderia cenocepacia (strain ATCC BAA-245 / DSM 16553 / LMG 16656 / NCTC 13227 / J2315 / CF5610) (Burkholderia cepacia (strain J2315)) protein is UPF0502 protein BceJ2315_62050.